Reading from the N-terminus, the 312-residue chain is Taste receptor type 2 member 9 (312 aa).

The Extracellular portion of the chain corresponds to 1 to 9; it reads MPSAIEAIY. The chain crosses the membrane as a helical span at residues 10 to 32; it reads IILIAGELTIGIWGNGFIVLVNC. Over 33–52 the chain is Cytoplasmic; the sequence is IDWLKRRDISLIDIILISLA. The chain crosses the membrane as a helical span at residues 53–72; the sequence is ISRICLLCVISLDGFFMLLF. The Extracellular portion of the chain corresponds to 73–86; sequence PGTYGNSVLVSIVN. The chain crosses the membrane as a helical span at residues 87 to 109; sequence VVWTFANNSSLWFTSCLSIFYLL. The Cytoplasmic segment spans residues 110–128; sequence KIANISHPFFFWLKLKINK. Residues 129-146 form a helical membrane-spanning segment; that stretch reads VMLAILLGSFLISLIISV. The Extracellular segment spans residues 147 to 180; sequence PKNDDMWYHLFKVSHEENITWKFKVSKIPGTFKQ. An N-linked (GlcNAc...) asparagine glycan is attached at asparagine 164. Residues 181 to 203 form a helical membrane-spanning segment; the sequence is LTLNLGVMVPFILCLISFFLLLF. At 204–234 the chain is on the cytoplasmic side; that stretch reads SLVRHTKQIRLHATGFRDPSTEAHMRAIKAV. A helical transmembrane segment spans residues 235–257; it reads IIFLLLLIVYYPVFLVMTSSALI. The Extracellular segment spans residues 258–261; sequence PQGK. Residues 262-284 traverse the membrane as a helical segment; it reads LVLMIGDIVTVIFPSSHSFILIM. Topologically, residues 285 to 312 are cytoplasmic; sequence GNSKLREAFLKMLRFVKCFLRRRKPFVP.

It belongs to the G-protein coupled receptor T2R family. Expressed in subsets of taste receptor cells of the tongue and palate epithelium and exclusively in gustducin-positive cells.

It is found in the membrane. Functionally, gustducin-coupled receptor implicated in the perception of bitter compounds in the oral cavity and the gastrointestinal tract. Signals through PLCB2 and the calcium-regulated cation channel TRPM5. This is Taste receptor type 2 member 9 (TAS2R9) from Homo sapiens (Human).